The primary structure comprises 144 residues: Peroxisome assembly protein 22 (144 aa).

The helical transmembrane segment at 13 to 35 threads the bilayer; the sequence is YGAVSLASLLVAASIVAYRWWNA.

The protein belongs to the peroxin-22 family.

The protein resides in the peroxisome membrane. Its function is as follows. Involved in peroxisome biogenesis. This Eremothecium gossypii (strain ATCC 10895 / CBS 109.51 / FGSC 9923 / NRRL Y-1056) (Yeast) protein is Peroxisome assembly protein 22 (PEX22).